A 154-amino-acid polypeptide reads, in one-letter code: Homeobox protein engrailed (154 aa).

Residues 37-96 (EKRPRTAFSASQLQRLKQEFQQSNYLTEQRRRSLAKELTLSESQIKIWFQNKRAKIKKAS) constitute a DNA-binding region (homeobox). The segment at 127–154 (KLLNGQNTSGDCSRSDYTSDSDGDSLTH) is disordered. A compositionally biased stretch (polar residues) spans 129 to 144 (LNGQNTSGDCSRSDYT). Over residues 145-154 (SDSDGDSLTH) the composition is skewed to acidic residues.

Belongs to the engrailed homeobox family.

It is found in the nucleus. The protein is Homeobox protein engrailed (EN) of Tripneustes gratilla (Hawaian sea urchin).